The sequence spans 944 residues: Isoleucine--tRNA ligase (944 aa).

A 'HIGH' region motif is present at residues 58–68 (PYANGQIHIGH). Glutamate 568 is a binding site for L-isoleucyl-5'-AMP. The short motif at 609 to 613 (KMSKS) is the 'KMSKS' region element. Lysine 612 is an ATP binding site. The Zn(2+) site is built by cysteine 907, cysteine 910, cysteine 927, and cysteine 930.

Belongs to the class-I aminoacyl-tRNA synthetase family. IleS type 1 subfamily. In terms of assembly, monomer. The cofactor is Zn(2+).

It localises to the cytoplasm. The enzyme catalyses tRNA(Ile) + L-isoleucine + ATP = L-isoleucyl-tRNA(Ile) + AMP + diphosphate. Functionally, catalyzes the attachment of isoleucine to tRNA(Ile). As IleRS can inadvertently accommodate and process structurally similar amino acids such as valine, to avoid such errors it has two additional distinct tRNA(Ile)-dependent editing activities. One activity is designated as 'pretransfer' editing and involves the hydrolysis of activated Val-AMP. The other activity is designated 'posttransfer' editing and involves deacylation of mischarged Val-tRNA(Ile). The chain is Isoleucine--tRNA ligase from Idiomarina loihiensis (strain ATCC BAA-735 / DSM 15497 / L2-TR).